Reading from the N-terminus, the 568-residue chain is Proline--tRNA ligase (568 aa).

This sequence belongs to the class-II aminoacyl-tRNA synthetase family. ProS type 1 subfamily. As to quaternary structure, homodimer.

It is found in the cytoplasm. It catalyses the reaction tRNA(Pro) + L-proline + ATP = L-prolyl-tRNA(Pro) + AMP + diphosphate. Its function is as follows. Catalyzes the attachment of proline to tRNA(Pro) in a two-step reaction: proline is first activated by ATP to form Pro-AMP and then transferred to the acceptor end of tRNA(Pro). As ProRS can inadvertently accommodate and process non-cognate amino acids such as alanine and cysteine, to avoid such errors it has two additional distinct editing activities against alanine. One activity is designated as 'pretransfer' editing and involves the tRNA(Pro)-independent hydrolysis of activated Ala-AMP. The other activity is designated 'posttransfer' editing and involves deacylation of mischarged Ala-tRNA(Pro). The misacylated Cys-tRNA(Pro) is not edited by ProRS. This is Proline--tRNA ligase from Lysinibacillus sphaericus (strain C3-41).